The sequence spans 205 residues: MSRYRGPRLRIVRRIGKLPSLTNKTSKKRKSPGQPATSFKRKKKISKYNIRLKEKQKLRFNYGITERQLLNYVKKSRKKKGSSGRFLLTFLEMRLDNIVHRIGFAPTIMAAKQLINHGHICVDDKVINIPSFICQPKSIIKPKKSTVSENVIQKNIESKELLLIPPHLSLNKKNLEAKIIGLINRKAISLIVNELLVIEFYSRKV.

The tract at residues 16–40 is disordered; sequence GKLPSLTNKTSKKRKSPGQPATSFK. An S4 RNA-binding domain is found at 93–161; that stretch reads MRLDNIVHRI…IQKNIESKEL (69 aa).

It belongs to the universal ribosomal protein uS4 family. As to quaternary structure, part of the 30S ribosomal subunit. Contacts protein S5. The interaction surface between S4 and S5 is involved in control of translational fidelity.

The protein resides in the plastid. It localises to the chloroplast. Functionally, one of the primary rRNA binding proteins, it binds directly to 16S rRNA where it nucleates assembly of the body of the 30S subunit. With S5 and S12 plays an important role in translational accuracy. The sequence is that of Small ribosomal subunit protein uS4c (rps4) from Euglena gracilis.